The primary structure comprises 905 residues: MEELTIWEQHTATLYKDPRRGFGIAVSGGHDRASGSVVVSDVVPGSPAEGRLRTGDHIVMVNGVSVENVTSAFAIQILKTCTKTANVTVKRPRRVQLPATKASPASGHQLSDQEEADHGRGYEGDSSSGSGRSWGERSRRSRAGRRGRVGSHGRRSSGGGSEANGLDLVSGYKRLPKQDVLMRPLKSVLVKRRNSEEFGVKLGSQIFIKHITESGLAARNHGLQEGDLILQINGVSSANLSLSDTRRLIEKSEGELTLLVLRDSGQFLVNIPPAVSDSDSSLMEDISDLTSELSQAPPSHVPPPPLKGQRSPEDSQTDSPVETPQPRRRERSVNSRAIAEPESPGESRYDIYRVPSRQSLEDRGYSPDTRVVSFPKGASIGLRLAGGNDVGIFVSGVQAGSPADGQGIQEGDEILQVNGMPFRNLTREEAVQFLLGLPPGEDMELVTQSKTGHSLRRWSQSRVGDSFYIRTHFELEPSPPYGLGFTRGDVFHVVDTLYPGSGPGHGHSSHGGLWLAARMGRDLREQERGVIPNQSRAEQLASLEAAQRAAGVGPGASVGSNPRAEFWRLRSLRRGTKKASTQRSREDLSALTRQGHYPPYERVVLREASFKRPVVILGPVADIAMKKLTTEMPEEFEIAESMSRTDSPSKIIKLDTVRVIAERDKHALLDVTPSAIERLNYVQYYPIVIFCAPESRPALKALREWLAPASRRSSRRLYAQAQKLQKHSGHLFTATIPLHGTSDSWYQEVKAVIQQQQARPIWTAEDQLNSSSEDLDLTGHGLAASSGDLSCDSRTNSDYEDTDGEGAYTDREGGPQDVDEEVAPTALARSSEPVWVDDHQGLMGHGTTITDKWETQADSHYTQDQRRQDSMRTYKHEALRKKFTRARDVESSDDEGYDWGPATDL.

The region spanning 11–93 (TATLYKDPRR…TANVTVKRPR (83 aa)) is the PDZ 1 domain. The interval 92-167 (PRRVQLPATK…GGGSEANGLD (76 aa)) is disordered. A phosphoserine mark is found at Ser-111 and Ser-128. A compositionally biased stretch (low complexity) spans 124–133 (GDSSSGSGRS). Residues 139–155 (RRSRAGRRGRVGSHGRR) show a composition bias toward basic residues. Residues Ser-156, Ser-157, Ser-161, Ser-195, and Ser-311 each carry the phosphoserine modification. One can recognise a PDZ 2 domain in the interval 187–264 (SVLVKRRNSE…ELTLLVLRDS (78 aa)). The segment at 289 to 367 (LTSELSQAPP…QSLEDRGYSP (79 aa)) is disordered. Thr-317 carries the post-translational modification Phosphothreonine. A phosphoserine mark is found at Ser-319, Ser-343, and Ser-359. A PDZ 3 domain is found at 368–434 (DTRVVSFPKG…LTREEAVQFL (67 aa)). Residues 464–541 (GDSFYIRTHF…PNQSRAEQLA (78 aa)) enclose the SH3 domain. One can recognise a Guanylate kinase-like domain in the interval 573–754 (RRGTKKASTQ…WYQEVKAVIQ (182 aa)). Position 584 is a phosphoserine (Ser-584). 2 disordered regions span residues 773 to 818 (EDLD…PQDV) and 850 to 905 (TDKW…ATDL). Basic and acidic residues predominate over residues 851–877 (DKWETQADSHYTQDQRRQDSMRTYKHE). 2 positions are modified to phosphoserine: Ser-891 and Ser-892.

The protein belongs to the MAGUK family. As to quaternary structure, interacts with occludin OCLN, claudins and TPJ1. Interacts with PATJ. Interacts with UBN1. Interacts with FASLG. Interacts with CCND1. Phosphorylated. In terms of tissue distribution, is concentrated in various types of epithelium, in tissues such as the lung, liver and kidney, but not in endothelium or at cadherin-based cell-cell adhesion sites.

It localises to the cell membrane. The protein localises to the cell junction. The protein resides in the tight junction. Its subcellular location is the nucleus. Its function is as follows. Tjp1, Tjp2, and Tjp3 are closely related scaffolding proteins that link tight junction (TJ) transmembrane proteins such as claudins, junctional adhesion molecules, and occludin to the actin cytoskeleton. The tight junction acts to limit movement of substances through the paracellular space and as a boundary between the compositionally distinct apical and basolateral plasma membrane domains of epithelial and endothelial cells. Binds and recruits PatJ to tight junctions where it connects and stabilizes apical and lateral components of tight junctions. Promotes cell-cycle progression through the sequestration of cyclin D1 (Ccnd1) at tight junctions during mitosis which prevents Ccnd1 degradation during M-phase and enables S-phase transition. With Tjp1 and Tjp2, participates in the junctional retention and stability of the transcription factor DbpA, but is not involved in its shuttling to the nucleus. Contrary to Tjp2, Tjp3 is dispensable for individual viability, embryonic development, epithelial differentiation, and the establishment of TJs, at least in the laboratory environment. The protein is Tight junction protein ZO-3 (Tjp3) of Mus musculus (Mouse).